Reading from the N-terminus, the 243-residue chain is Small ribosomal subunit protein uS5 (243 aa).

A disordered region spans residues 1–54 (MSDNEKETQVAEETQNTQATAESSNNDERRGRRNNRGGEGRRGDRRGRREDNHE). Polar residues predominate over residues 11–24 (AEETQNTQATAESS). The span at 26–54 (NDERRGRRNNRGGEGRRGDRRGRREDNHE) shows a compositional bias: basic and acidic residues. One can recognise an S5 DRBM domain in the interval 57 to 120 (MLDRVVTINR…LDAKKHLFNV (64 aa)).

This sequence belongs to the universal ribosomal protein uS5 family. Part of the 30S ribosomal subunit. Contacts proteins S4 and S8.

With S4 and S12 plays an important role in translational accuracy. In terms of biological role, located at the back of the 30S subunit body where it stabilizes the conformation of the head with respect to the body. The chain is Small ribosomal subunit protein uS5 from Bifidobacterium animalis subsp. lactis (strain AD011).